Consider the following 394-residue polypeptide: Stearoyl-[acyl-carrier-protein] 9-desaturase 1, chloroplastic (394 aa).

The N-terminal 37 residues, 1–37, are a transit peptide targeting the chloroplast; sequence MVMAMDRIALFSSSSSVYHHGSSHSHGSKSSRVFTIR. Glu135, Glu173, His176, Glu226, Glu259, and His262 together coordinate Fe cation.

Belongs to the fatty acid desaturase type 2 family. As to quaternary structure, homodimer. Fe(2+) serves as cofactor. In terms of tissue distribution, ubiquitously expressed.

The protein resides in the plastid. It is found in the chloroplast. The enzyme catalyses octadecanoyl-[ACP] + 2 reduced [2Fe-2S]-[ferredoxin] + O2 + 2 H(+) = (9Z)-octadecenoyl-[ACP] + 2 oxidized [2Fe-2S]-[ferredoxin] + 2 H2O. The protein operates within lipid metabolism; fatty acid metabolism. Its function is as follows. Converts stearoyl-ACP to oleoyl-ACP by introduction of a cis double bond between carbons 9 and 10 of the acyl chain. This is Stearoyl-[acyl-carrier-protein] 9-desaturase 1, chloroplastic (S-ACP-DES1) from Arabidopsis thaliana (Mouse-ear cress).